The sequence spans 280 residues: Sulfur carrier protein FdhD (280 aa).

C121 functions as the Cysteine persulfide intermediate in the catalytic mechanism. Mo-bis(molybdopterin guanine dinucleotide) is bound at residue 258–263 (FSRPGR).

This sequence belongs to the FdhD family.

Its subcellular location is the cytoplasm. Functionally, required for formate dehydrogenase (FDH) activity. Acts as a sulfur carrier protein that transfers sulfur from IscS to the molybdenum cofactor prior to its insertion into FDH. The polypeptide is Sulfur carrier protein FdhD (Cronobacter sakazakii (strain ATCC BAA-894) (Enterobacter sakazakii)).